Consider the following 184-residue polypeptide: Non-fimbrial adhesin 1 (184 aa).

An N-terminal signal peptide occupies residues 1–28 (MKAKKYENQIYNENGRRCQRHGRRLAIA). C57 and C91 are joined by a disulfide.

In terms of assembly, forms a polymeric structure, which disintegrates with elevated temperature into a monomer but with some relatively stable dimers.

This Escherichia coli protein is Non-fimbrial adhesin 1 (nfaA).